The sequence spans 441 residues: tRNA modification GTPase MnmE (441 aa).

(6S)-5-formyl-5,6,7,8-tetrahydrofolate is bound by residues Arg23, Glu81, and Arg121. Positions 219–366 (GFTVVLAGAP…LLDAIQAAAE (148 aa)) constitute a TrmE-type G domain. GTP contacts are provided by residues 229–234 (NSGKST), 248–254 (SDSPGTT), and 273–276 (DTAG). Positions 233 and 254 each coordinate Mg(2+). Lys441 is a binding site for (6S)-5-formyl-5,6,7,8-tetrahydrofolate.

Belongs to the TRAFAC class TrmE-Era-EngA-EngB-Septin-like GTPase superfamily. TrmE GTPase family. Homodimer. Heterotetramer of two MnmE and two MnmG subunits. It depends on K(+) as a cofactor.

It is found in the cytoplasm. In terms of biological role, exhibits a very high intrinsic GTPase hydrolysis rate. Involved in the addition of a carboxymethylaminomethyl (cmnm) group at the wobble position (U34) of certain tRNAs, forming tRNA-cmnm(5)s(2)U34. This Methylobacterium radiotolerans (strain ATCC 27329 / DSM 1819 / JCM 2831 / NBRC 15690 / NCIMB 10815 / 0-1) protein is tRNA modification GTPase MnmE.